The following is a 92-amino-acid chain: N(2)-fixation sustaining protein CowN (92 aa).

This sequence belongs to the CowN family.

Functionally, is required to sustain N(2)-dependent growth in the presence of low levels of carbon monoxide (CO). Probably acts by protecting the N(2) fixation ability of the nitrogenase complex, which is inactivated in the presence of CO. The protein is N(2)-fixation sustaining protein CowN of Cereibacter sphaeroides (strain KD131 / KCTC 12085) (Rhodobacter sphaeroides).